Here is a 948-residue protein sequence, read N- to C-terminus: Protocadherin alpha-2 (948 aa).

Positions methionine 1–alanine 22 are cleaved as a signal peptide. Topologically, residues alanine 23 to asparagine 697 are extracellular. Cadherin domains follow at residues glutamine 30–phenylalanine 133, alanine 157–phenylalanine 242, alanine 243–valine 350, serine 351–phenylalanine 455, alanine 456–leucine 565, and glycine 588–alanine 678. N-linked (GlcNAc...) asparagine glycans are attached at residues asparagine 257, asparagine 265, asparagine 362, and asparagine 548. A helical transmembrane segment spans residues valine 698–tyrosine 718. Over threonine 719–glutamine 948 the chain is Cytoplasmic. One copy of the PXXP 1 repeat lies at proline 734–proline 737. Positions proline 734–proline 892 are 5 X 4 AA repeats of P-X-X-P. Disordered stretches follow at residues arginine 755 to asparagine 801, glycine 829 to proline 854, and lysine 868 to glutamine 948. Positions alanine 783 to glycine 795 are enriched in basic and acidic residues. PXXP repeat units lie at residues proline 797 to proline 800, proline 830 to proline 833, proline 871 to proline 874, and proline 889 to proline 892. Positions aspartate 907–lysine 921 are enriched in basic and acidic residues.

It is found in the cell membrane. Potential calcium-dependent cell-adhesion protein. May be involved in the establishment and maintenance of specific neuronal connections in the brain. The polypeptide is Protocadherin alpha-2 (PCDHA2) (Pan troglodytes (Chimpanzee)).